Here is a 1045-residue protein sequence, read N- to C-terminus: Extracellular serine protease (1045 aa).

Positions 1 to 27 (MILNKRLKLAYCVFLGCYGLSIHSSLA) are cleaved as a signal peptide. Residues 49 to 397 (QWGLEAISAE…WGRVNLRDAI (349 aa)) form the Peptidase S8 domain. Catalysis depends on charge relay system residues Asp76, His112, and Ser341. A propeptide spans 646 to 1045 (SLASTENEKA…SVNAGLTWRF (400 aa)) (translocator domain; removed in mature form). The Autotransporter domain maps to 769-1045 (IKADDNGAWA…SVNAGLTWRF (277 aa)).

It belongs to the peptidase S8 family.

It localises to the secreted. This Serratia marcescens protein is Extracellular serine protease.